A 276-amino-acid polypeptide reads, in one-letter code: Adenylate kinase (276 aa).

50–55 contributes to the ATP binding site; that stretch reads GAGKGT. Residues 70–99 form an NMP region; the sequence is ATGDMLRSQVAKKTPLGREAKKIMDQGGLV. AMP-binding positions include Thr71, Arg76, 97-99, 126-129, and Gln133; these read GLV and GFPR. The segment at 167 to 204 is LID; that stretch reads GRLVHPASGRSYHTTFNPPKKAMTDDVTGEPLIQRSDD. ATP contacts are provided by residues Arg168 and 177-178; that span reads SY. Residues Arg201 and Arg212 each coordinate AMP. Gln240 lines the ATP pocket.

The protein belongs to the adenylate kinase family. AK2 subfamily. As to quaternary structure, monomer.

Its subcellular location is the cytoplasm. It is found in the cytosol. It localises to the mitochondrion intermembrane space. The enzyme catalyses AMP + ATP = 2 ADP. Functionally, catalyzes the reversible transfer of the terminal phosphate group between ATP and AMP. Plays an important role in cellular energy homeostasis and in adenine nucleotide metabolism. Adenylate kinase activity is critical for regulation of the phosphate utilization and the AMP de novo biosynthesis pathways. In Pyricularia oryzae (strain 70-15 / ATCC MYA-4617 / FGSC 8958) (Rice blast fungus), this protein is Adenylate kinase.